The primary structure comprises 121 residues: Large ribosomal subunit protein bL12 (121 aa).

This sequence belongs to the bacterial ribosomal protein bL12 family. As to quaternary structure, homodimer. Part of the ribosomal stalk of the 50S ribosomal subunit. Forms a multimeric L10(L12)X complex, where L10 forms an elongated spine to which 2 to 4 L12 dimers bind in a sequential fashion. Binds GTP-bound translation factors.

Forms part of the ribosomal stalk which helps the ribosome interact with GTP-bound translation factors. Is thus essential for accurate translation. This Pseudomonas fluorescens (strain ATCC BAA-477 / NRRL B-23932 / Pf-5) protein is Large ribosomal subunit protein bL12.